Consider the following 361-residue polypeptide: Phosphate acyltransferase (361 aa).

The tract at residues Ala-342 to Thr-361 is disordered.

It belongs to the PlsX family. Homodimer. Probably interacts with PlsY.

The protein resides in the cytoplasm. The enzyme catalyses a fatty acyl-[ACP] + phosphate = an acyl phosphate + holo-[ACP]. The protein operates within lipid metabolism; phospholipid metabolism. Catalyzes the reversible formation of acyl-phosphate (acyl-PO(4)) from acyl-[acyl-carrier-protein] (acyl-ACP). This enzyme utilizes acyl-ACP as fatty acyl donor, but not acyl-CoA. This is Phosphate acyltransferase from Anaeromyxobacter sp. (strain K).